The chain runs to 314 residues: DNA-directed RNA polymerase subunit alpha (314 aa).

An alpha N-terminal domain (alpha-NTD) region spans residues 1–228 (MAQFQIECVE…NLFIPLKDLN (228 aa)). Residues 243–314 (PESQIPIEEL…ITLPHEKAKA (72 aa)) form an alpha C-terminal domain (alpha-CTD) region.

Belongs to the RNA polymerase alpha chain family. Homodimer. In cyanobacteria the RNAP catalytic core is composed of 2 alpha, 1 beta, 1 beta', 1 gamma and 1 omega subunit. When a sigma factor is associated with the core the holoenzyme is formed, which can initiate transcription.

The catalysed reaction is RNA(n) + a ribonucleoside 5'-triphosphate = RNA(n+1) + diphosphate. DNA-dependent RNA polymerase catalyzes the transcription of DNA into RNA using the four ribonucleoside triphosphates as substrates. This Synechocystis sp. (strain ATCC 27184 / PCC 6803 / Kazusa) protein is DNA-directed RNA polymerase subunit alpha.